The sequence spans 1289 residues: DNA-directed RNA polymerase subunit beta (1289 aa).

It belongs to the RNA polymerase beta chain family. As to quaternary structure, the RNAP catalytic core consists of 2 alpha, 1 beta, 1 beta' and 1 omega subunit. When a sigma factor is associated with the core the holoenzyme is formed, which can initiate transcription.

The enzyme catalyses RNA(n) + a ribonucleoside 5'-triphosphate = RNA(n+1) + diphosphate. Functionally, DNA-dependent RNA polymerase catalyzes the transcription of DNA into RNA using the four ribonucleoside triphosphates as substrates. In Methylacidiphilum infernorum (isolate V4) (Methylokorus infernorum (strain V4)), this protein is DNA-directed RNA polymerase subunit beta.